Consider the following 388-residue polypeptide: Gastricsin (388 aa).

Residues 1-16 (MKWMVVVLVCLQLLEA) form the signal peptide. Residues 17-59 (AVVKVPLKKFKSIRETMKEKGLLGEFLRTHKYDPAWKYRFGDL) constitute a propeptide, activation peptide. Residues 73–385 (YFGEISIGTP…DLGNNRVGFA (313 aa)) form the Peptidase A1 domain. The active site involves Asp-91. Disulfide bonds link Cys-104–Cys-109 and Cys-267–Cys-271. Asp-276 is an active-site residue. An intrachain disulfide couples Cys-310 to Cys-343.

The protein belongs to the peptidase A1 family.

It is found in the secreted. It catalyses the reaction More restricted specificity than pepsin A, but shows preferential cleavage at Tyr-|-Xaa bonds. High activity on hemoglobin.. Its function is as follows. Hydrolyzes a variety of proteins. This Homo sapiens (Human) protein is Gastricsin (PGC).